Reading from the N-terminus, the 229-residue chain is Lipoprotein-releasing system ATP-binding protein LolD (229 aa).

Residues leucine 6–leucine 226 form the ABC transporter domain. Alanine 42–serine 49 is an ATP binding site.

Belongs to the ABC transporter superfamily. Lipoprotein translocase (TC 3.A.1.125) family. As to quaternary structure, the complex is composed of two ATP-binding proteins (LolD) and two transmembrane proteins (LolC and LolE).

It localises to the cell inner membrane. Part of the ABC transporter complex LolCDE involved in the translocation of mature outer membrane-directed lipoproteins, from the inner membrane to the periplasmic chaperone, LolA. Responsible for the formation of the LolA-lipoprotein complex in an ATP-dependent manner. The sequence is that of Lipoprotein-releasing system ATP-binding protein LolD from Chelativorans sp. (strain BNC1).